A 241-amino-acid chain; its full sequence is Phycocyanobilin:ferredoxin oxidoreductase (241 aa).

Belongs to the HY2 family.

The enzyme catalyses (2R,3Z)-phycocyanobilin + 4 oxidized [2Fe-2S]-[ferredoxin] = biliverdin IXalpha + 4 reduced [2Fe-2S]-[ferredoxin] + 4 H(+). Catalyzes the four-electron reduction of biliverdin IX-alpha (2-electron reduction at both the A and D rings); the reaction proceeds via an isolatable 2-electron intermediate, 181,182-dihydrobiliverdin. In Prochlorococcus marinus (strain MIT 9215), this protein is Phycocyanobilin:ferredoxin oxidoreductase.